A 210-amino-acid chain; its full sequence is MVDFKMTKEGLVLLIRDYQNLEEVLNAISARITQMGGFFAKGDRISLMIENHNKHSQDIPKIVSHLRNLGLEVSQILVGSTVGGKENDLKVESRTTVESTGKVIKRNIRSGQTVVHSGDVIVFGNVNKGAEILAGGSVVVFGKAQGNIRAGLNEGEQAVVAALDLQTSLIQIAGFITHSKGEENVPSIAHVKGNRIVIEPFDKVSFERSE.

This sequence belongs to the MinC family. In terms of assembly, interacts with MinD and FtsZ.

Cell division inhibitor that blocks the formation of polar Z ring septums. Rapidly oscillates between the poles of the cell to destabilize FtsZ filaments that have formed before they mature into polar Z rings. Prevents FtsZ polymerization. This chain is Probable septum site-determining protein MinC, found in Thermotoga petrophila (strain ATCC BAA-488 / DSM 13995 / JCM 10881 / RKU-1).